The sequence spans 293 residues: Proline iminopeptidase (293 aa).

In terms of domain architecture, AB hydrolase-1 spans 28–277; it reads PLVLLHGGPG…NCSHMSFVQK (250 aa). Ser-105 serves as the catalytic Nucleophile. Asp-244 is an active-site residue. His-271 serves as the catalytic Proton donor.

The protein belongs to the peptidase S33 family.

It is found in the cell envelope. The enzyme catalyses Release of N-terminal proline from a peptide.. Its function is as follows. Releases the N-terminal proline from various substrates. This Lactobacillus acidophilus (strain ATCC 700396 / NCK56 / N2 / NCFM) protein is Proline iminopeptidase.